A 138-amino-acid polypeptide reads, in one-letter code: ATP synthase epsilon chain (138 aa).

It belongs to the ATPase epsilon chain family. F-type ATPases have 2 components, CF(1) - the catalytic core - and CF(0) - the membrane proton channel. CF(1) has five subunits: alpha(3), beta(3), gamma(1), delta(1), epsilon(1). CF(0) has three main subunits: a, b and c.

Its subcellular location is the cell inner membrane. Produces ATP from ADP in the presence of a proton gradient across the membrane. This chain is ATP synthase epsilon chain, found in Blochmanniella floridana.